We begin with the raw amino-acid sequence, 109 residues long: Large ribosomal subunit protein uL24 (109 aa).

Belongs to the universal ribosomal protein uL24 family. In terms of assembly, part of the 50S ribosomal subunit.

In terms of biological role, one of two assembly initiator proteins, it binds directly to the 5'-end of the 23S rRNA, where it nucleates assembly of the 50S subunit. Its function is as follows. One of the proteins that surrounds the polypeptide exit tunnel on the outside of the subunit. This Legionella pneumophila subsp. pneumophila (strain Philadelphia 1 / ATCC 33152 / DSM 7513) protein is Large ribosomal subunit protein uL24.